The primary structure comprises 433 residues: Signal recognition particle 54 kDa protein (433 aa).

GTP is bound by residues 106–113 (GVEGSGKT), 186–190 (DTAGR), and 244–247 (TKMD).

It belongs to the GTP-binding SRP family. SRP54 subfamily. In terms of assembly, part of the signal recognition particle protein translocation system, which is composed of SRP and FtsY. Archaeal SRP consists of a 7S RNA molecule of 300 nucleotides and two protein subunits: SRP54 and SRP19.

Its subcellular location is the cytoplasm. The enzyme catalyses GTP + H2O = GDP + phosphate + H(+). Its function is as follows. Involved in targeting and insertion of nascent membrane proteins into the cytoplasmic membrane. Binds to the hydrophobic signal sequence of the ribosome-nascent chain (RNC) as it emerges from the ribosomes. The SRP-RNC complex is then targeted to the cytoplasmic membrane where it interacts with the SRP receptor FtsY. This Pyrobaculum arsenaticum (strain DSM 13514 / JCM 11321 / PZ6) protein is Signal recognition particle 54 kDa protein.